The sequence spans 458 residues: Exodeoxyribonuclease 7 large subunit (458 aa).

It belongs to the XseA family. Heterooligomer composed of large and small subunits.

It is found in the cytoplasm. It carries out the reaction Exonucleolytic cleavage in either 5'- to 3'- or 3'- to 5'-direction to yield nucleoside 5'-phosphates.. Bidirectionally degrades single-stranded DNA into large acid-insoluble oligonucleotides, which are then degraded further into small acid-soluble oligonucleotides. In Sodalis glossinidius (strain morsitans), this protein is Exodeoxyribonuclease 7 large subunit.